The sequence spans 102 residues: Large ribosomal subunit protein bL21 (102 aa).

The protein belongs to the bacterial ribosomal protein bL21 family. As to quaternary structure, part of the 50S ribosomal subunit. Contacts protein L20.

In terms of biological role, this protein binds to 23S rRNA in the presence of protein L20. The chain is Large ribosomal subunit protein bL21 from Shouchella clausii (strain KSM-K16) (Alkalihalobacillus clausii).